The primary structure comprises 185 residues: Transcriptional repressor NrdR (185 aa).

Residues 1 to 24 (MRCPFCGGPDTQVKDSRPSEDSSA) form a disordered region. Residues 3–34 (CPFCGGPDTQVKDSRPSEDSSAIRRRRVCPDC) fold into a zinc finger. Positions 12–24 (QVKDSRPSEDSSA) are enriched in basic and acidic residues. One can recognise an ATP-cone domain in the interval 49 to 139 (LVVLKRSGKR…VYKNFREAQD (91 aa)). A disordered region spans residues 148–185 (GERLDGEGDLPEQGDAVPAPPDEAVAAPRRGRPARKRA). Residues 176 to 185 (RRGRPARKRA) are compositionally biased toward basic residues.

This sequence belongs to the NrdR family. Zn(2+) is required as a cofactor.

Negatively regulates transcription of bacterial ribonucleotide reductase nrd genes and operons by binding to NrdR-boxes. The protein is Transcriptional repressor NrdR of Methylorubrum extorquens (strain CM4 / NCIMB 13688) (Methylobacterium extorquens).